The chain runs to 412 residues: Hyaluronidase-3 (412 aa).

The first 22 residues, 1–22 (MITQLGLTLVVGLTLCLVHVQA), serve as a signal peptide directing secretion. 5 disulfide bridges follow: cysteine 42/cysteine 332, cysteine 206/cysteine 221, cysteine 357/cysteine 368, cysteine 362/cysteine 396, and cysteine 398/cysteine 407. N-linked (GlcNAc...) asparagine glycosylation is present at asparagine 69. The active-site Proton donor is glutamate 129. The N-linked (GlcNAc...) asparagine glycan is linked to asparagine 216. The 56-residue stretch at 353–408 (AATACSHQRCHGHGRCSWKDPGQMEAFLHLQPDDNLGAWKSFRCRCYLGWSGPTCL) folds into the EGF-like domain.

The protein belongs to the glycosyl hydrolase 56 family. N-glycosylated.

The protein localises to the secreted. The protein resides in the cell membrane. Its subcellular location is the cytoplasmic vesicle. It localises to the secretory vesicle. It is found in the acrosome. The protein localises to the endoplasmic reticulum. The protein resides in the early endosome. The enzyme catalyses Random hydrolysis of (1-&gt;4)-linkages between N-acetyl-beta-D-glucosamine and D-glucuronate residues in hyaluronate.. Functionally, facilitates sperm penetration into the layer of cumulus cells surrounding the egg by digesting hyaluronic acid. Involved in induction of the acrosome reaction in the sperm. Involved in follicular atresia, the breakdown of immature ovarian follicles that are not selected to ovulate. Induces ovarian granulosa cell apoptosis, possibly via apoptotic signaling pathway involving CASP8 and CASP3 activation, and poly(ADP-ribose) polymerase (PARP) cleavage. Has no hyaluronidase activity in embryonic fibroblasts in vitro. Has no hyaluronidase activity in granulosa cells in vitro. This is Hyaluronidase-3 (Hyal3) from Rattus norvegicus (Rat).